The sequence spans 214 residues: Tungstate uptake system ATP-binding protein TupC (214 aa).

An ABC transporter domain is found at 3-214; sequence ITVSNLKKSY…GRVGEADGFF (212 aa). 35-42 lines the ATP pocket; that stretch reads GPNGAGKT.

Belongs to the ABC transporter superfamily. As to quaternary structure, the complex is composed of two ATP-binding proteins (TupC), two transmembrane proteins (TupB) and a solute-binding protein (TupA).

It catalyses the reaction tungstate(in) + ATP + H2O = tungstate(out) + ADP + phosphate + H(+). In terms of biological role, part of an ABC transporter complex involved in tungstate uptake. Probably responsible for energy coupling to the transport system. This chain is Tungstate uptake system ATP-binding protein TupC, found in Peptoclostridium acidaminophilum (Eubacterium acidaminophilum).